A 172-amino-acid chain; its full sequence is 3-hydroxydecanoyl-[acyl-carrier-protein] dehydratase (172 aa).

The active site involves His71.

Belongs to the thioester dehydratase family. FabA subfamily. In terms of assembly, homodimer.

Its subcellular location is the cytoplasm. The catalysed reaction is a (3R)-hydroxyacyl-[ACP] = a (2E)-enoyl-[ACP] + H2O. It catalyses the reaction (3R)-hydroxydecanoyl-[ACP] = (2E)-decenoyl-[ACP] + H2O. It carries out the reaction (2E)-decenoyl-[ACP] = (3Z)-decenoyl-[ACP]. Its pathway is lipid metabolism; fatty acid biosynthesis. Necessary for the introduction of cis unsaturation into fatty acids. Catalyzes the dehydration of (3R)-3-hydroxydecanoyl-ACP to E-(2)-decenoyl-ACP and then its isomerization to Z-(3)-decenoyl-ACP. Can catalyze the dehydratase reaction for beta-hydroxyacyl-ACPs with saturated chain lengths up to 16:0, being most active on intermediate chain length. The polypeptide is 3-hydroxydecanoyl-[acyl-carrier-protein] dehydratase (Blochmanniella pennsylvanica (strain BPEN)).